The following is a 125-amino-acid chain: UPF0389 protein CG9231 (125 aa).

Residues 69-88 form a helical membrane-spanning segment; sequence IRLANIMIALTAVGCAIMVY. An N-linked (GlcNAc...) asparagine glycan is attached at N112.

Belongs to the UPF0389 family.

The protein localises to the membrane. In Drosophila melanogaster (Fruit fly), this protein is UPF0389 protein CG9231.